The chain runs to 4516 residues: Dynein axonemal heavy chain 1 (4516 aa).

The segment at 1–1748 is stem; that stretch reads MVTLSISDTL…YIRAVNAEFI (1748 aa). A disordered region spans residues 78–160; the sequence is SSGSDKSLKN…RKSPLAGTDK (83 aa). Basic and acidic residues-rich tracts occupy residues 83–97 and 113–129; these read KSLK…KEEA and ENHD…RNPE. 4 AAA regions span residues 1749–1956, 2016–2249, 2422–2682, and 2780–2972; these read YGYE…VISA, QAIR…TTVK, TMMP…VFQG, and DYNQ…CCTI. Positions 1787-1794 match the GPAGTGKT motif motif; the sequence is GPAGTGKT. Residue 1787 to 1794 coordinates ATP; it reads GPAGTGKT. A CFDEFNR motif motif is present at residues 1837–1843; sequence CFDEFNR. ATP-binding positions include 2054–2061, 2460–2467, and 2819–2826; these read GPTGSGKS, GPTGTGKT, and GVGGSGRS. The interval 2987–3285 is stalk; that stretch reads ATRFLHEIPE…MHKYHFVAKA (299 aa). Residues 3293–3394 adopt a coiled-coil conformation; the sequence is LREAQDDLEV…QDTVENLENM (102 aa). 2 AAA regions span residues 3388-3618 and 3831-4050; these read VENL…EERP and LPAF…SYNS.

This sequence belongs to the dynein heavy chain family. Consists of at least two heavy chains and a number of intermediate and light chains. Expressed in brain.

It localises to the cytoplasm. Its subcellular location is the cytoskeleton. The protein resides in the cilium axoneme. It is found in the cell projection. The protein localises to the cilium. It localises to the flagellum. Its function is as follows. Force generating protein of cilia required for sperm flagellum motility. Produces force towards the minus ends of microtubules. Dynein has ATPase activity; the force-producing power stroke is thought to occur on release of ADP. Required in spermatozoa for the formation of the inner dynein arms and biogenesis of the axoneme. In Rattus norvegicus (Rat), this protein is Dynein axonemal heavy chain 1.